The primary structure comprises 131 residues: Profilin-2 (131 aa).

This sequence belongs to the profilin family. As to quaternary structure, occurs in many kinds of cells as a complex with monomeric actin in a 1:1 ratio. Expressed in vascular bundles of roots, hypocotyls, cotyledons, leaves, sepals, petals, stamen filaments and stalks of developing seeds. Expressed in leaf epidermal cells, trichomes and stem epidermal cells. Detected in phloem exudates (at protein level).

The protein localises to the cytoplasm. Its subcellular location is the cytoskeleton. It localises to the endoplasmic reticulum. The protein resides in the cytosol. It is found in the nucleus. Its function is as follows. Binds to actin monomers and regulates the organization of the actin cytoskeleton. At high concentrations, profilin prevents the polymerization of actin, whereas it enhances it at low concentrations. At low concentrations, associates with the poly-proline motif of formins to enhance actin filament elongation rate. Binds G-actin and poly-L-proline with low affinity in vitro. Binds ACT1, ACT7 and ACT11 and inhibits actin polymerization. May be involved in the cross-talk between vesicular trafficking and the actin cytoskeleton. Inhibits cell growth of various pathogenic fungal strains. May play a role as antifungal proteins in the defense system against fungal pathogen attacks. This Arabidopsis thaliana (Mouse-ear cress) protein is Profilin-2.